The primary structure comprises 384 residues: Putative spore germination protein YfkR (384 aa).

The signal sequence occupies residues 1 to 20 (MKKTIYKCVLPLLICILLTG). The N-palmitoyl cysteine moiety is linked to residue Cys-21. Cys-21 is lipidated: S-diacylglycerol cysteine.

This sequence belongs to the GerABKC lipoprotein family.

It localises to the cell membrane. In terms of biological role, may be involved in spore germination. The protein is Putative spore germination protein YfkR (yfkR) of Bacillus subtilis (strain 168).